We begin with the raw amino-acid sequence, 244 residues long: Transcriptional activator protein FnrA (244 aa).

An HTH crp-type domain is found at Lys159 to Ile232. The H-T-H motif DNA-binding region spans Arg192 to Thr211.

Its function is as follows. Transcriptional regulator of arginine deiminase. This chain is Transcriptional activator protein FnrA (fnrA), found in Stutzerimonas stutzeri (Pseudomonas stutzeri).